Here is a 230-residue protein sequence, read N- to C-terminus: Orotidine 5'-phosphate decarboxylase (230 aa).

Substrate contacts are provided by residues Asp-11, Lys-34, Asp-61 to Thr-70, Thr-117, Arg-179, Gln-188, Gly-208, and Arg-209. The Proton donor role is filled by Lys-63.

Belongs to the OMP decarboxylase family. Type 1 subfamily. As to quaternary structure, homodimer.

The enzyme catalyses orotidine 5'-phosphate + H(+) = UMP + CO2. The protein operates within pyrimidine metabolism; UMP biosynthesis via de novo pathway; UMP from orotate: step 2/2. Its function is as follows. Catalyzes the decarboxylation of orotidine 5'-monophosphate (OMP) to uridine 5'-monophosphate (UMP). This is Orotidine 5'-phosphate decarboxylase from Streptococcus equi subsp. zooepidemicus (strain MGCS10565).